We begin with the raw amino-acid sequence, 571 residues long: Glycine--tRNA ligase (571 aa).

Substrate-binding residues include Arg-99 and Glu-165. ATP is bound by residues Arg-197 to Glu-199, Ile-207 to Phe-212, Glu-324 to Cys-325, and Gly-443 to Arg-446. Phe-212–Glu-216 lines the substrate pocket. Glu-439 to Gly-443 serves as a coordination point for substrate.

The protein belongs to the class-II aminoacyl-tRNA synthetase family.

Its subcellular location is the cytoplasm. The enzyme catalyses tRNA(Gly) + glycine + ATP = glycyl-tRNA(Gly) + AMP + diphosphate. Catalyzes the attachment of glycine to tRNA(Gly). This is Glycine--tRNA ligase from Pyrococcus abyssi (strain GE5 / Orsay).